Reading from the N-terminus, the 529-residue chain is Phosphoenolpyruvate carboxykinase (ATP) (529 aa).

Arg52 serves as a coordination point for substrate. Arg130, Asn131, and Phe133 together coordinate Ca(2+). Tyr191 and Lys197 together coordinate substrate. Residues Lys197, His216, and 232-240 (GLSGTGKTT) contribute to the ATP site. The Mn(2+) site is built by Lys197 and His216. Asp253 serves as a coordination point for Mn(2+). Gly267 lines the Ca(2+) pocket. ATP is bound by residues Glu281, Arg319, 438–439 (RF), Phe439, and Thr444. Arg319 lines the substrate pocket.

This sequence belongs to the phosphoenolpyruvate carboxykinase (ATP) family. Dimer of dimers. Mn(2+) is required as a cofactor.

It localises to the cytoplasm. It catalyses the reaction oxaloacetate + ATP = phosphoenolpyruvate + ADP + CO2. It functions in the pathway carbohydrate biosynthesis; gluconeogenesis. Allosterically activated by calcium. Functionally, involved in gluconeogenesis. Catalyzes the conversion of oxaloacetate (OAA) to phosphoenolpyruvate (PEP) through direct phosphoryl transfer between the nucleoside triphosphate and OAA. This chain is Phosphoenolpyruvate carboxykinase (ATP), found in Thermus thermophilus (strain ATCC 27634 / DSM 579 / HB8).